The primary structure comprises 134 residues: DNA-binding protein H-NS, plasmid (134 aa).

Residues 23-67 (LEILEELLEKLSVVVEERRQEESSKEAELKARLEKIESLRQLMLE) adopt a coiled-coil conformation. Residues 77-96 (SSFSAKSGAPKKVREPRPAK) are disordered. The DNA-binding element occupies 112–117 (QGRTPK).

It belongs to the histone-like protein H-NS family. As to quaternary structure, homodimer that oligomerizes on DNA into higher-order complexes that form bridges between disparate regions of DNA compacting it. Interacts with Hha, YdgT and StpA.

It localises to the cytoplasm. The protein resides in the nucleoid. Its function is as follows. A DNA-binding protein implicated in transcriptional repression and chromosome organization and compaction. Binds DNA, modifying gene expression, especially non-core genes. Does not regulate the same set of genes as its chromosomal counterpart (tested in S.typhimurium strain SL1344 / SV5015, chromosomal H-NS protein is AC A0A0H3NBY9). Thus it has a not-completely overlapping set of gene targets compared to its chromosomal homolog; many of these target genes are either plasmid-encoded or acquired by horizontally transferred genes (HTG). This protein can function in the absence of H-NS-modulating protein Hha (either chromosomal or plasmid-encoded), although many HTG genes are regulated by an H-NS/Hha complex. Binds nucleation sites in AT-rich DNA and bridges them, forming higher-order nucleoprotein complexes and condensing the chromosome. A subset of genes are repressed by H-NS in association with Hha and/or Cnu (ydgT). The chain is DNA-binding protein H-NS, plasmid (hns) from Salmonella typhi.